The primary structure comprises 360 residues: Aminomethyltransferase (360 aa).

The protein belongs to the GcvT family. The glycine cleavage system is composed of four proteins: P, T, L and H.

It catalyses the reaction N(6)-[(R)-S(8)-aminomethyldihydrolipoyl]-L-lysyl-[protein] + (6S)-5,6,7,8-tetrahydrofolate = N(6)-[(R)-dihydrolipoyl]-L-lysyl-[protein] + (6R)-5,10-methylene-5,6,7,8-tetrahydrofolate + NH4(+). Its function is as follows. The glycine cleavage system catalyzes the degradation of glycine. The chain is Aminomethyltransferase from Flavobacterium psychrophilum (strain ATCC 49511 / DSM 21280 / CIP 103535 / JIP02/86).